A 465-amino-acid chain; its full sequence is Probable inactive receptor-like kinase BSK12 (465 aa).

The span at 1-12 shows a compositional bias: polar residues; that stretch reads MGCCYSLSSTVD. Residues 1 to 34 form a disordered region; that stretch reads MGCCYSLSSTVDPVQDHTTDASSEPRNGGGEDPP. Gly2 carries the N-myristoyl glycine lipid modification. S-palmitoyl cysteine attachment occurs at residues Cys3 and Cys4. Residues 50 to 291 form the Protein kinase domain; sequence FSPENIVSDQ…KEIVATLETL (242 aa). ATP is bound by residues 56-64 and Lys78; that span reads VSDQTSDVV.

Belongs to the protein kinase superfamily. Ser/Thr protein kinase family. In terms of assembly, interacts with YDA. Post-translationally, diacylation-mediated membrane association is essential for BSK12 function. In terms of tissue distribution, expressed at the mRNA level in the sperm cells in mature pollen, but the protein is only detectable in the zygote and the micropylar endosperm upon fertilization.

Its subcellular location is the cell membrane. In terms of biological role, probable inactive protein kinase that activates the YODA MAP kinase cascade, which regulates the asymmetric first division and embryo polarity, by promoting the elongation of the zygote and the development of its basal daughter cell into the extra-embryonic suspensor. Acts as an adapter at the plasma membrane, possibly by recruiting and binding an activator. The chain is Probable inactive receptor-like kinase BSK12 from Arabidopsis thaliana (Mouse-ear cress).